The following is a 145-amino-acid chain: Leghemoglobin-2 (145 aa).

Positions 3–145 constitute a Globin domain; the sequence is AFSDKQEGLV…ELAAAIKKAY (143 aa). Nitrated tyrosine occurs at positions 26 and 31. Serine 46 contributes to the heme b binding site. Serine 46 carries the post-translational modification Phosphoserine. O2 is bound at residue histidine 62. The heme b site is built by lysine 65, histidine 93, and lysine 96. Position 134 is a nitrated tyrosine (tyrosine 134).

It belongs to the plant globin family. In terms of assembly, monomer. In terms of processing, nitrated in effective nodules and particularly in hypoxic conditions; this mechanism may play a protective role in the symbiosis by buffering toxic peroxynitrite NO(2)(-). Nitration level decrease during nodule senescence. Phosphorylation at Ser-46 disrupts the molecular environment of its porphyrin ring oxygen binding pocket, thus leading to a reduced oxygen consumption and to the delivery of oxygen O(2) to symbiosomes. In terms of tissue distribution, root nodules.

The protein localises to the cytoplasm. Its subcellular location is the cytosol. The protein resides in the nucleus. Functionally, leghemoglobin that reversibly binds oxygen O(2) through a pentacoordinated heme iron. In root nodules, facilitates the diffusion of oxygen to the bacteroids while preventing the bacterial nitrogenase from being inactivated by buffering dioxygen, nitric oxide and carbon monoxide, and promoting the formation of reactive oxygen species (ROS, e.g. H(2)O(2)). This role is essential for symbiotic nitrogen fixation (SNF). The protein is Leghemoglobin-2 of Vigna unguiculata (Cowpea).